Reading from the N-terminus, the 275-residue chain is Large ribosomal subunit protein uL2 (275 aa).

Disordered regions lie at residues 24–47 (IHKGSPHASLLESQSKTGGRNHHG) and 227–261 (PVDHPHGGGEAKSGQGNPHPVTPWGVPTKGYKTRK).

The protein belongs to the universal ribosomal protein uL2 family. In terms of assembly, part of the 50S ribosomal subunit. Forms a bridge to the 30S subunit in the 70S ribosome.

Functionally, one of the primary rRNA binding proteins. Required for association of the 30S and 50S subunits to form the 70S ribosome, for tRNA binding and peptide bond formation. It has been suggested to have peptidyltransferase activity; this is somewhat controversial. Makes several contacts with the 16S rRNA in the 70S ribosome. The chain is Large ribosomal subunit protein uL2 from Xylella fastidiosa (strain M12).